The chain runs to 134 residues: Small ribosomal subunit protein uS9 (134 aa).

The tract at residues 109-134 (KGDPRRKEPKKFGGRGARARRQKSYR) is disordered. A compositionally biased stretch (basic residues) spans 115–134 (KEPKKFGGRGARARRQKSYR).

It belongs to the universal ribosomal protein uS9 family.

This Methanopyrus kandleri (strain AV19 / DSM 6324 / JCM 9639 / NBRC 100938) protein is Small ribosomal subunit protein uS9.